Consider the following 317-residue polypeptide: Olfactory receptor-like protein OLF3 (317 aa).

Residues 1–25 (MGTGNQTWVREFVLLGLSSDWDTEV) lie on the Extracellular side of the membrane. The N-linked (GlcNAc...) asparagine glycan is linked to N5. Residues 26 to 49 (SLFVLFLITYMVTVLGNFLIILLI) traverse the membrane as a helical segment. At 50–57 (RLDSRLHT) the chain is on the cytoplasmic side. A helical membrane pass occupies residues 58-79 (PMYFFLTNLSLVDVSYATSIIP). The Extracellular portion of the chain corresponds to 80-100 (QMLAHLLAAHKAIPFVSCAAQ). Residues 101–120 (LFFSLGLGGIEFVLLAVMAY) traverse the membrane as a helical segment. Over 121 to 139 (DRYVAVCDPLRYSVIMHGG) the chain is Cytoplasmic. Residues 140–158 (LCTRLAITSWVSGSMNSLM) traverse the membrane as a helical segment. Residues 159-196 (QTVITFQLPMCTNKYIDHISCELLAVVRLACVDTSSNE) are Extracellular-facing. A helical membrane pass occupies residues 197-219 (IAIMVSSIVLLMTPFCLVLLSYI). Residues 220–236 (QIISTILKIQSTEGRKK) lie on the Cytoplasmic side of the membrane. The chain crosses the membrane as a helical span at residues 237 to 260 (AFHTCASHLTVVVLCYGMAIFTYI). Residues 261–272 (QPRSSPSVLQEK) are Extracellular-facing. Residues 273-292 (LISLFYSVLTPMLNPMIYSV) form a helical membrane-spanning segment. Topologically, residues 293–317 (RNKEVKGAWQKLLGQLTGITSKLAT) are cytoplasmic.

It belongs to the G-protein coupled receptor 1 family.

The protein resides in the cell membrane. In terms of biological role, putative odorant or sperm cell receptor. The polypeptide is Olfactory receptor-like protein OLF3 (Canis lupus familiaris (Dog)).